Reading from the N-terminus, the 138-residue chain is Invertebrate-type lysozyme 6 (138 aa).

The signal sequence occupies residues 1-18; that stretch reads MFVKLCGILAFAVTYASS. The region spanning 19-138 is the I-type lysozyme domain; that stretch reads DCLQCICKKE…WNGIKGLGCS (120 aa). Disulfide bonds link cysteine 20–cysteine 106, cysteine 25–cysteine 31, cysteine 36–cysteine 45, cysteine 58–cysteine 86, cysteine 76–cysteine 82, and cysteine 98–cysteine 120. Glutamate 28 acts as the Proton donor in catalysis. The active-site Nucleophile is aspartate 39. Position 51–57 (51–57) interacts with substrate; that stretch reads KLSYYKD. Residues tyrosine 90 and 113–115 each bind substrate; that span reads HNG.

The protein belongs to the glycosyl hydrolase 22 family. Type-I lysozyme subfamily. As to expression, expressed in pharyngeal gland cells and duct projections, coelomocytes and intestine.

The enzyme catalyses Hydrolysis of (1-&gt;4)-beta-linkages between N-acetylmuramic acid and N-acetyl-D-glucosamine residues in a peptidoglycan and between N-acetyl-D-glucosamine residues in chitodextrins.. Functionally, has bacteriolytic activity against Gram-positive bacteria. In Caenorhabditis elegans, this protein is Invertebrate-type lysozyme 6.